A 948-amino-acid polypeptide reads, in one-letter code: ELKS/Rab6-interacting/CAST family member 1 (948 aa).

The segment at 1–54 is disordered; sequence MYGSARSVGKVEPSSQSPGRSPRLPRSPRLGHRRTNSTGGSSGNSVGGGSGKTL. An N6-acetyllysine modification is found at lysine 10. Positions 13-28 are enriched in low complexity; that stretch reads PSSQSPGRSPRLPRSP. Phosphoserine is present on residues serine 17, serine 21, and serine 37. A Phosphothreonine modification is found at threonine 38. Residues 40–51 show a composition bias toward gly residues; it reads GSSGNSVGGGSG. Phosphoserine occurs at positions 55, 75, 94, 796, and 937. Residues 144-920 are a coiled coil; that stretch reads RQARDNTIMD…RMKLMADNYE (777 aa). Basic and acidic residues predominate over residues 773–796; that stretch reads KHKEQVEKKKSAQMLEEARRREDS. Disordered regions lie at residues 773-801 and 903-948; these read KHKEQVEKKKSAQMLEEARRREDSLSDSS and QLKQ…GIWA. Positions 939-948 are enriched in acidic residues; sequence DQDEEEGIWA.

Interacts with the GTB-bound forms of RAB6A isoform 1 and isoform 2 and with RAB6B. The interaction was strongest with RAB6B, followed by RAB6A isoform 2 and weakest with RAB6A isoform 1. Part of a complex with CHUK, IKBKB and IKBKG. Interacts with CHUK, IKBKB and IKBKG. The interaction with IKBKG is independent of CHUK and IKBKB. Interacts with NFKBIA. Isoform 1 interacts through its C-terminus with the PDZ domains of RIMS1 and RIMS2. Interacts with ERC2/CAST1. Interacts with SDCCAG8. Part of a cortical microtubule stabilization complex (CMSC) composed of KANK1, PPFIA1, PPFIBP1, ERC1/ELKS, PHLDB2/LL5beta, CLASPs, KIF21A and possibly additional interactors; within CMSCs KANK1 and PHLDB2/LL5beta appear to be the core components for targeting of microtubule-binding proteins KIF21A and CLASPs, whereas PPFIA1, PPFIBP1 and ERC1/ELKS serve as scaffolds for protein clustering. In terms of tissue distribution, isoform 1 is specifically expressed in brain. A further probable isoform is widely expressed outside of brain It is referred to as ERC1a by PubMed:12391317 and characterized by a C-terminus identical to that of isoforms 1 in human and mouse.

It is found in the cytoplasm. It localises to the cytoskeleton. The protein resides in the microtubule organizing center. Its subcellular location is the centrosome. The protein localises to the membrane. It is found in the golgi apparatus membrane. It localises to the presynaptic active zone. The protein resides in the cell projection. Its subcellular location is the podosome. Regulatory subunit of the IKK complex. Probably recruits IkappaBalpha/NFKBIA to the complex. May be involved in the organization of the cytomatrix at the nerve terminals active zone (CAZ) which regulates neurotransmitter release. May be involved in vesicle trafficking at the CAZ. May be involved in Rab-6 regulated endosomes to Golgi transport. This chain is ELKS/Rab6-interacting/CAST family member 1 (Erc1), found in Rattus norvegicus (Rat).